A 185-amino-acid polypeptide reads, in one-letter code: MALQDDKPGSAPKERSGRQIRSSAARLAAVQALYVLDLAEDARVDQVVLDFMSGSMGGMAIVEVADPEGIFDPTEEIAALEPPDGELFAMLVRGAHAELARLDEVIGASLSADWPWDRLEPVVRAVLRAGVYELLERQRTPPRVAIKEYVDIAAAFYSGAEPGMVNAVLDRVARSARPEAFGGGV.

The protein belongs to the NusB family.

Involved in transcription antitermination. Required for transcription of ribosomal RNA (rRNA) genes. Binds specifically to the boxA antiterminator sequence of the ribosomal RNA (rrn) operons. The polypeptide is Transcription antitermination protein NusB (Rhodospirillum rubrum (strain ATCC 11170 / ATH 1.1.1 / DSM 467 / LMG 4362 / NCIMB 8255 / S1)).